A 77-amino-acid chain; its full sequence is Conotoxin PnMKLT1-0122 (77 aa).

The first 22 residues, 1 to 22, serve as a signal peptide directing secretion; sequence MKLTCMMIVAVLFLTAWTFATA. A propeptide spanning residues 23 to 49 is cleaved from the precursor; sequence EDPRNGLENLFSKAHHEMKNPEDSKLN. Cystine bridges form between Cys-52-Cys-67, Cys-59-Cys-71, and Cys-66-Cys-76.

Belongs to the conotoxin O1 superfamily. In terms of tissue distribution, expressed by the venom duct.

It localises to the secreted. The protein is Conotoxin PnMKLT1-0122 of Conus pennaceus (Feathered cone).